The primary structure comprises 440 residues: Glutamyl-tRNA reductase (440 aa).

Substrate-binding positions include 47–50 (TCNR), serine 110, 115–117 (ERE), and glutamine 121. Residue cysteine 48 is the Nucleophile of the active site. 192-197 (GTGAYA) provides a ligand contact to NADP(+).

Belongs to the glutamyl-tRNA reductase family. In terms of assembly, homodimer.

The enzyme catalyses (S)-4-amino-5-oxopentanoate + tRNA(Glu) + NADP(+) = L-glutamyl-tRNA(Glu) + NADPH + H(+). It participates in porphyrin-containing compound metabolism; protoporphyrin-IX biosynthesis; 5-aminolevulinate from L-glutamyl-tRNA(Glu): step 1/2. In terms of biological role, catalyzes the NADPH-dependent reduction of glutamyl-tRNA(Glu) to glutamate 1-semialdehyde (GSA). The polypeptide is Glutamyl-tRNA reductase (Paenarthrobacter aurescens (strain TC1)).